The sequence spans 149 residues: D-aminoacyl-tRNA deacylase (149 aa).

A Gly-cisPro motif, important for rejection of L-amino acids motif is present at residues 137 to 138 (GP).

It belongs to the DTD family. Homodimer.

Its subcellular location is the cytoplasm. It carries out the reaction glycyl-tRNA(Ala) + H2O = tRNA(Ala) + glycine + H(+). The catalysed reaction is a D-aminoacyl-tRNA + H2O = a tRNA + a D-alpha-amino acid + H(+). In terms of biological role, an aminoacyl-tRNA editing enzyme that deacylates mischarged D-aminoacyl-tRNAs. Also deacylates mischarged glycyl-tRNA(Ala), protecting cells against glycine mischarging by AlaRS. Acts via tRNA-based rather than protein-based catalysis; rejects L-amino acids rather than detecting D-amino acids in the active site. By recycling D-aminoacyl-tRNA to D-amino acids and free tRNA molecules, this enzyme counteracts the toxicity associated with the formation of D-aminoacyl-tRNA entities in vivo and helps enforce protein L-homochirality. In Alkaliphilus metalliredigens (strain QYMF), this protein is D-aminoacyl-tRNA deacylase.